A 241-amino-acid polypeptide reads, in one-letter code: Ribonuclease PH (241 aa).

Phosphate is bound by residues Arg-89 and 127-129; that span reads GTR.

This sequence belongs to the RNase PH family. In terms of assembly, homohexameric ring arranged as a trimer of dimers.

It catalyses the reaction tRNA(n+1) + phosphate = tRNA(n) + a ribonucleoside 5'-diphosphate. In terms of biological role, phosphorolytic 3'-5' exoribonuclease that plays an important role in tRNA 3'-end maturation. Removes nucleotide residues following the 3'-CCA terminus of tRNAs; can also add nucleotides to the ends of RNA molecules by using nucleoside diphosphates as substrates, but this may not be physiologically important. Probably plays a role in initiation of 16S rRNA degradation (leading to ribosome degradation) during starvation. The sequence is that of Ribonuclease PH from Xylella fastidiosa (strain 9a5c).